Here is a 589-residue protein sequence, read N- to C-terminus: MEGSWSYKLLYVFLCIVLGILYGIANPILLAQGLGFIFPITSSNGRAVDSIYSLIYPTNLNVFIRLTIVSVTVFVAYALIFVFNVAQNYVGIKLYQQTCATLRWKAYLKMQSMSTSFFDTQNNGDLMSRLTNDMYNIDNLFTQAGGQAIQSLFNILTTSVLIFLLSPVIALISLSILATLITFSFAFLKKSKTSYSQVQNNLGDMSGYIEEVLTNHKVVHVLKLQEIMIKDFDQYNKSMIKPTVRGNTYSIFLFSWFGFISNITYLVSISIATAFSVNSIPSFGISVINYSFMLSYIASLRQITLALDQIFTLWNLVQLGVVSAERVFKVLDLNVEKDTATIDKLPDIKGNIRFENVAFGYNKDKPTLTGINFSVKHGDVVAIVGPTGAGKSTIINLLMKFYKPFEGKIYMDNFEISDVTKKAWREKISIVLQDSFLFSGTIKENIRLGRQDATDDEIIAACKTANAHDFIMRLPKGYDTYISNKADYLSVGERQLLTIARAVIRNAPVLLLDEATSSVDVHSEKLIQESIGRLMKNKTSFIISHRLSIIRDATLIMVINDGKVLEMGNHDQLMKQNGFYARLKQSSVR.

A run of 6 helical transmembrane segments spans residues 9–29 (LLYVFLCIVLGILYGIANPIL), 66–86 (LTIVSVTVFVAYALIFVFNVA), 161–181 (LIFLLSPVIALISLSILATLI), 251–271 (IFLFSWFGFISNITYLVSISI), 280–300 (IPSFGISVINYSFMLSYIASL), and 303–323 (ITLALDQIFTLWNLVQLGVVS). Residues 9-319 (LLYVFLCIVL…IFTLWNLVQL (311 aa)) enclose the ABC transmembrane type-1 domain. Residues 352 to 586 (IRFENVAFGY…NGFYARLKQS (235 aa)) form the ABC transporter domain. 385 to 392 (GPTGAGKS) is a binding site for ATP.

The protein belongs to the ABC transporter superfamily.

It is found in the cell membrane. The chain is Putative ABC transporter ATP-binding protein MG015 from Mycoplasma genitalium (strain ATCC 33530 / DSM 19775 / NCTC 10195 / G37) (Mycoplasmoides genitalium).